The following is a 162-amino-acid chain: Protein-export protein SecB (162 aa).

This sequence belongs to the SecB family. As to quaternary structure, homotetramer, a dimer of dimers. One homotetramer interacts with 1 SecA dimer.

The protein localises to the cytoplasm. Its function is as follows. One of the proteins required for the normal export of preproteins out of the cell cytoplasm. It is a molecular chaperone that binds to a subset of precursor proteins, maintaining them in a translocation-competent state. It also specifically binds to its receptor SecA. The polypeptide is Protein-export protein SecB (Legionella pneumophila subsp. pneumophila (strain Philadelphia 1 / ATCC 33152 / DSM 7513)).